The following is a 567-amino-acid chain: 2-isopropylmalate synthase (567 aa).

The region spanning 28 to 302 (PQWCSVDLRD…NPELDFSDIN (275 aa)) is the Pyruvate carboxyltransferase domain. Mg(2+) contacts are provided by aspartate 37, histidine 241, histidine 243, and asparagine 277. Positions 435–567 (IRTPLQLNYH…DMDTQEEDIA (133 aa)) are regulatory domain.

This sequence belongs to the alpha-IPM synthase/homocitrate synthase family. LeuA type 2 subfamily. As to quaternary structure, homodimer. It depends on Mg(2+) as a cofactor.

The protein localises to the cytoplasm. The catalysed reaction is 3-methyl-2-oxobutanoate + acetyl-CoA + H2O = (2S)-2-isopropylmalate + CoA + H(+). It participates in amino-acid biosynthesis; L-leucine biosynthesis; L-leucine from 3-methyl-2-oxobutanoate: step 1/4. Functionally, catalyzes the condensation of the acetyl group of acetyl-CoA with 3-methyl-2-oxobutanoate (2-ketoisovalerate) to form 3-carboxy-3-hydroxy-4-methylpentanoate (2-isopropylmalate). The sequence is that of 2-isopropylmalate synthase from Acetoanaerobium sticklandii (strain ATCC 12662 / DSM 519 / JCM 1433 / CCUG 9281 / NCIMB 10654 / HF) (Clostridium sticklandii).